A 162-amino-acid chain; its full sequence is Caveolin-2 (162 aa).

At 1 to 86 the chain is on the cytoplasmic side; it reads MGLEKEKLEC…FELVKFIFYR (86 aa). The helical intramembrane region spans 87 to 107; that stretch reads LLTTLLAVPAAFILGVVFGVL. Residues 108–162 lie on the Cytoplasmic side of the membrane; sequence SCIHIWLVMPVTRSFLMLLPSIQVVWKSVTDMFITPLFHSMGRSLSSIQVRTSDT.

It belongs to the caveolin family. In terms of assembly, homooligomer.

The protein localises to the golgi apparatus membrane. The protein resides in the cell membrane. It localises to the membrane. It is found in the caveola. Functionally, may act as a scaffolding protein within caveolar membranes. Interacts directly with G-protein alpha subunits and can functionally regulate their activity. The protein is Caveolin-2 (cav2) of Takifugu rubripes (Japanese pufferfish).